A 79-amino-acid chain; its full sequence is Small ribosomal subunit protein uS17 (79 aa).

This sequence belongs to the universal ribosomal protein uS17 family. Part of the 30S ribosomal subunit.

In terms of biological role, one of the primary rRNA binding proteins, it binds specifically to the 5'-end of 16S ribosomal RNA. This is Small ribosomal subunit protein uS17 from Rhizobium etli (strain CIAT 652).